We begin with the raw amino-acid sequence, 352 residues long: DNA polymerase IV (352 aa).

The 182-residue stretch at 6–187 (IIHIDCDCFY…LPVSKLHGVG (182 aa)) folds into the UmuC domain. Mg(2+) is bound by residues aspartate 10 and aspartate 105. Glutamate 106 is an active-site residue.

This sequence belongs to the DNA polymerase type-Y family. Monomer. Requires Mg(2+) as cofactor.

It is found in the cytoplasm. The catalysed reaction is DNA(n) + a 2'-deoxyribonucleoside 5'-triphosphate = DNA(n+1) + diphosphate. Poorly processive, error-prone DNA polymerase involved in untargeted mutagenesis. Copies undamaged DNA at stalled replication forks, which arise in vivo from mismatched or misaligned primer ends. These misaligned primers can be extended by PolIV. Exhibits no 3'-5' exonuclease (proofreading) activity. May be involved in translesional synthesis, in conjunction with the beta clamp from PolIII. This Ectopseudomonas mendocina (strain ymp) (Pseudomonas mendocina) protein is DNA polymerase IV.